Consider the following 503-residue polypeptide: WAS/WASL-interacting protein family member 1 (503 aa).

Over residues 1-14 the composition is skewed to pro residues; the sequence is MPVPPPPAPPPPPT. Residues 1–503 form a disordered region; that stretch reads MPVPPPPAPP…GAPPLPPIPR (503 aa). Positions 21 to 31 are enriched in polar residues; it reads EKPTLNKTEQA. A WH2 domain is found at 32-49; it reads GRNALLSDISKGKKLKKT. Residue arginine 33 is modified to Asymmetric dimethylarginine. The interval 45-48 is binds actin; sequence KLKK. Positions 65–104 are enriched in gly residues; that stretch reads AGAGGGGGGFGGGGGFGGGGGGGGGGSFGGGGPPGLGGLF. Low complexity predominate over residues 121–137; sequence SGGSRPPLLPPGGRSTS. 2 positions are modified to omega-N-methylarginine: arginine 125 and arginine 134. Pro residues-rich tracts occupy residues 141-154, 161-174, 182-191, and 204-223; these read FSPP…PVPS, PPEP…PPRP, SIPPPVPSTP, and PPVP…PPFP. Position 142 is a phosphoserine (serine 142). Serine 234 carries the post-translational modification Phosphoserine. Over residues 238–247 the composition is skewed to low complexity; that stretch reads SPLSSSSPFS. Composition is skewed to pro residues over residues 282 to 298 and 306 to 323; these read VPPP…PSTP and APPP…PLPP. Serine 340 bears the Phosphoserine mark. The residue at position 345 (threonine 345) is a Phosphothreonine. Positions 346-371 are enriched in pro residues; it reads PPLPSPGRSGPLPPPPSERPPPPVRD. Serine 350 bears the Phosphoserine mark. XRSGPXPPXP motif repeat units lie at residues 352 to 361, 374 to 383, and 410 to 419; these read GRSGPLPPPP and PRSGPRPPLP. Pro residues predominate over residues 413–434; that stretch reads GPRPPLPPDRPSAGAPPPPPPS. Over residues 480-494 the composition is skewed to basic and acidic residues; it reads ARNESRSGSNRRERG.

Belongs to the verprolin family. As to quaternary structure, binds to WAS, profilin and actin. Binds to WASL. Interacts with DBNL. Interacts with FNBP1L (via the SH3 domain). Highly expressed in peripheral blood mononuclear cells, spleen, placenta, small intestine, colon and thymus. Lower expression in ovary, heart, brain, lung, liver, skeletal muscle, kidney, pancreas, prostate and testis.

It is found in the cytoplasmic vesicle. It localises to the cytoplasm. The protein resides in the cytoskeleton. The protein localises to the cell projection. Its subcellular location is the ruffle. Plays a role in the reorganization of the actin cytoskeleton. Contributes with NCK1 and GRB2 in the recruitment and activation of WASL. May participate in regulating the subcellular localization of WASL, resulting in the disassembly of stress fibers in favor of filopodia formation. Plays a role in the formation of cell ruffles. Plays an important role in the intracellular motility of vaccinia virus by functioning as an adapter for recruiting WASL to vaccinia virus. The protein is WAS/WASL-interacting protein family member 1 (WIPF1) of Homo sapiens (Human).